Reading from the N-terminus, the 651-residue chain is Chaperone protein HtpG (651 aa).

Residues 1 to 353 are a; substrate-binding; the sequence is MAAHVEQLEF…AQDMSLNVSR (353 aa). The tract at residues 354–569 is b; it reads EILQQDRQIR…TFGITPALAR (216 aa). A c region spans residues 570–651; it reads MYRASGQPVP…RLTRTVGDQT (82 aa).

This sequence belongs to the heat shock protein 90 family. In terms of assembly, homodimer.

The protein localises to the cytoplasm. Molecular chaperone. Has ATPase activity. The protein is Chaperone protein HtpG of Mycolicibacterium vanbaalenii (strain DSM 7251 / JCM 13017 / BCRC 16820 / KCTC 9966 / NRRL B-24157 / PYR-1) (Mycobacterium vanbaalenii).